The primary structure comprises 163 residues: MFFSEARARSRTWEASPSEHRKWVEVFKACDEDHKGYLSREDFKTAVVMLFGYKPSKIEVDSVMSSINPNTSGILLEGFLNIVRKKKEAQRYRNEVRHIFTAFDTYYRGFLTLEDFKKAFRQVAPKLPERTVLEVFREVDRDSDGHVSFRDFEYALNYGQKEA.

3 EF-hand domains span residues 18–53, 91–126, and 127–162; these read SEHRKWVEVFKACDEDHKGYLSREDFKTAVVMLFGY, RYRNEVRHIFTAFDTYYRGFLTLEDFKKAFRQVAPK, and LPERTVLEVFREVDRDSDGHVSFRDFEYALNYGQKE. Positions 140, 142, 144, 146, and 151 each coordinate Ca(2+).

This is EF-hand calcium-binding domain-containing protein 11 (EFCAB11) from Homo sapiens (Human).